Consider the following 181-residue polypeptide: Transcription antitermination protein NusB (181 aa).

A disordered region spans residues 1–36; sequence MTEDNNKAAGAKPRPARQVRTGLTSTGARKASAKSN.

The protein belongs to the NusB family.

Its function is as follows. Involved in transcription antitermination. Required for transcription of ribosomal RNA (rRNA) genes. Binds specifically to the boxA antiterminator sequence of the ribosomal RNA (rrn) operons. The polypeptide is Transcription antitermination protein NusB (Variovorax paradoxus (strain S110)).